Reading from the N-terminus, the 506-residue chain is ATP synthase subunit alpha (506 aa).

169-176 (GDRQTGKT) contacts ATP.

Belongs to the ATPase alpha/beta chains family. As to quaternary structure, F-type ATPases have 2 components, CF(1) - the catalytic core - and CF(0) - the membrane proton channel. CF(1) has five subunits: alpha(3), beta(3), gamma(1), delta(1), epsilon(1). CF(0) has three main subunits: a(1), b(2) and c(9-12). The alpha and beta chains form an alternating ring which encloses part of the gamma chain. CF(1) is attached to CF(0) by a central stalk formed by the gamma and epsilon chains, while a peripheral stalk is formed by the delta and b chains.

The protein resides in the cell membrane. The catalysed reaction is ATP + H2O + 4 H(+)(in) = ADP + phosphate + 5 H(+)(out). Its function is as follows. Produces ATP from ADP in the presence of a proton gradient across the membrane. The alpha chain is a regulatory subunit. The polypeptide is ATP synthase subunit alpha (Acetivibrio thermocellus (strain ATCC 27405 / DSM 1237 / JCM 9322 / NBRC 103400 / NCIMB 10682 / NRRL B-4536 / VPI 7372) (Clostridium thermocellum)).